Reading from the N-terminus, the 386-residue chain is MNLHEYQAKQVLRSSNLNTPRGIAATSADAAADAARELGGEAWVVKAQIHAGGRGKAGGVKVVTSIDAVRSVAAALLGKPLVTVQNAPDGQPVHTVLVEETLPIARELYLSLLVDRASERVAVVASAAGGMDIEQVAHATPEKVLTEICDPLLGVQDFQCRALAFALGLGGDAYKDFCRLLPQLYRVFVANDLSLLEINPLVVTTDNRVLPLDCKMSVDDNALYRRKALADLRDDSQIDAKEAAANAANVNYVALAGNIGCMVNGAGLAMATMDLIQLEGGAPANFLDVGGGATPETVAQGFKIILLDPNVKAVLINIFGGIVRCDVIAEGIIQAVREVGVEVPVIVRLEGTNAELGRTLLAESGLAIVAAESLTQAAKFAVEKAA.

Residues 9-244 (KQVLRSSNLN…DSQIDAKEAA (236 aa)) form the ATP-grasp domain. Residues Lys-46, 53–55 (GRG), Glu-99, Leu-102, and Glu-107 each bind ATP. Residues Asn-199 and Asp-213 each contribute to the Mg(2+) site. Substrate contacts are provided by residues Asn-264 and 321–323 (GIV).

The protein belongs to the succinate/malate CoA ligase beta subunit family. As to quaternary structure, heterotetramer of two alpha and two beta subunits. Mg(2+) is required as a cofactor.

The catalysed reaction is succinate + ATP + CoA = succinyl-CoA + ADP + phosphate. The enzyme catalyses GTP + succinate + CoA = succinyl-CoA + GDP + phosphate. It participates in carbohydrate metabolism; tricarboxylic acid cycle; succinate from succinyl-CoA (ligase route): step 1/1. In terms of biological role, succinyl-CoA synthetase functions in the citric acid cycle (TCA), coupling the hydrolysis of succinyl-CoA to the synthesis of either ATP or GTP and thus represents the only step of substrate-level phosphorylation in the TCA. The beta subunit provides nucleotide specificity of the enzyme and binds the substrate succinate, while the binding sites for coenzyme A and phosphate are found in the alpha subunit. This is Succinate--CoA ligase [ADP-forming] subunit beta from Thiobacillus denitrificans (strain ATCC 25259 / T1).